The primary structure comprises 458 residues: tRNA modification GTPase MnmE (458 aa).

(6S)-5-formyl-5,6,7,8-tetrahydrofolate-binding residues include arginine 22, glutamate 84, and arginine 123. A TrmE-type G domain is found at 220-379 (GISTAIIGRP…LEKAIADLFF (160 aa)). Asparagine 230 provides a ligand contact to K(+). GTP contacts are provided by residues 230-235 (NVGKSS), 249-255 (TDIAGTT), and 274-277 (DTAG). Serine 234 contacts Mg(2+). K(+) is bound by residues threonine 249, isoleucine 251, and threonine 254. Threonine 255 provides a ligand contact to Mg(2+). Lysine 458 is a binding site for (6S)-5-formyl-5,6,7,8-tetrahydrofolate.

Belongs to the TRAFAC class TrmE-Era-EngA-EngB-Septin-like GTPase superfamily. TrmE GTPase family. Homodimer. Heterotetramer of two MnmE and two MnmG subunits. Requires K(+) as cofactor.

Its subcellular location is the cytoplasm. Exhibits a very high intrinsic GTPase hydrolysis rate. Involved in the addition of a carboxymethylaminomethyl (cmnm) group at the wobble position (U34) of certain tRNAs, forming tRNA-cmnm(5)s(2)U34. This Bacillus mycoides (strain KBAB4) (Bacillus weihenstephanensis) protein is tRNA modification GTPase MnmE.